The sequence spans 214 residues: A-type ATP synthase subunit D (214 aa).

The protein belongs to the V-ATPase D subunit family. As to quaternary structure, has multiple subunits with at least A(3), B(3), C, D, E, F, H, I and proteolipid K(x).

The protein resides in the cell membrane. Functionally, component of the A-type ATP synthase that produces ATP from ADP in the presence of a proton gradient across the membrane. The chain is A-type ATP synthase subunit D from Thermococcus kodakarensis (strain ATCC BAA-918 / JCM 12380 / KOD1) (Pyrococcus kodakaraensis (strain KOD1)).